The following is a 322-amino-acid chain: uncharacterized protein (322 aa).

Residues 277–322 (LVTYGGKDGPSDNEDGPSDDEDGPSDDEEGLSKDGVSEYYQSDLDD) form a disordered region. A compositionally biased stretch (acidic residues) spans 287–305 (SDNEDGPSDDEDGPSDDEE).

This is an uncharacterized protein from Frog virus 3 (isolate Goorha) (FV-3).